Here is a 616-residue protein sequence, read N- to C-terminus: Dihydroxy-acid dehydratase (616 aa).

Asp81 contacts Mg(2+). Cys122 is a binding site for [2Fe-2S] cluster. Asp123 and Lys124 together coordinate Mg(2+). Lys124 carries the post-translational modification N6-carboxylysine. [2Fe-2S] cluster is bound at residue Cys195. Glu491 provides a ligand contact to Mg(2+). Ser517 functions as the Proton acceptor in the catalytic mechanism.

The protein belongs to the IlvD/Edd family. Homodimer. [2Fe-2S] cluster serves as cofactor. Requires Mg(2+) as cofactor.

The catalysed reaction is (2R)-2,3-dihydroxy-3-methylbutanoate = 3-methyl-2-oxobutanoate + H2O. The enzyme catalyses (2R,3R)-2,3-dihydroxy-3-methylpentanoate = (S)-3-methyl-2-oxopentanoate + H2O. Its pathway is amino-acid biosynthesis; L-isoleucine biosynthesis; L-isoleucine from 2-oxobutanoate: step 3/4. The protein operates within amino-acid biosynthesis; L-valine biosynthesis; L-valine from pyruvate: step 3/4. Functionally, functions in the biosynthesis of branched-chain amino acids. Catalyzes the dehydration of (2R,3R)-2,3-dihydroxy-3-methylpentanoate (2,3-dihydroxy-3-methylvalerate) into 2-oxo-3-methylpentanoate (2-oxo-3-methylvalerate) and of (2R)-2,3-dihydroxy-3-methylbutanoate (2,3-dihydroxyisovalerate) into 2-oxo-3-methylbutanoate (2-oxoisovalerate), the penultimate precursor to L-isoleucine and L-valine, respectively. The polypeptide is Dihydroxy-acid dehydratase (Tolumonas auensis (strain DSM 9187 / NBRC 110442 / TA 4)).